The sequence spans 637 residues: 1-deoxy-D-xylulose-5-phosphate synthase (637 aa).

Thiamine diphosphate contacts are provided by residues histidine 71 and 112 to 114; that span reads SHA. Position 144 (aspartate 144) interacts with Mg(2+). Thiamine diphosphate contacts are provided by residues 145–146, asparagine 173, tyrosine 284, and glutamate 365; that span reads GA. Asparagine 173 serves as a coordination point for Mg(2+).

It belongs to the transketolase family. DXPS subfamily. In terms of assembly, homodimer. Requires Mg(2+) as cofactor. Thiamine diphosphate serves as cofactor.

The catalysed reaction is D-glyceraldehyde 3-phosphate + pyruvate + H(+) = 1-deoxy-D-xylulose 5-phosphate + CO2. Its pathway is metabolic intermediate biosynthesis; 1-deoxy-D-xylulose 5-phosphate biosynthesis; 1-deoxy-D-xylulose 5-phosphate from D-glyceraldehyde 3-phosphate and pyruvate: step 1/1. Catalyzes the acyloin condensation reaction between C atoms 2 and 3 of pyruvate and glyceraldehyde 3-phosphate to yield 1-deoxy-D-xylulose-5-phosphate (DXP). This is 1-deoxy-D-xylulose-5-phosphate synthase from Mycolicibacterium gilvum (strain PYR-GCK) (Mycobacterium gilvum (strain PYR-GCK)).